The primary structure comprises 640 residues: Insulin-like growth factor 1 receptor (640 aa).

Fibronectin type-III domains are found at residues Val-5–Ala-101 and Ile-107–Lys-200. The Extracellular segment spans residues Glu-14–His-208. 5 N-linked (GlcNAc...) asparagine glycosylation sites follow: Asn-20, Asn-29, Asn-37, Asn-173, and Asn-186. A helical membrane pass occupies residues Leu-209–His-232. Topologically, residues Arg-233–Cys-640 are cytoplasmic. The short motif at Asn-250–Tyr-253 is the IRS1- and SHC1-binding element. Tyr-253 bears the Phosphotyrosine mark. The Protein kinase domain occupies Ile-272–Phe-547. Residues Leu-278–Val-286 and Lys-306 each bind ATP. Asp-408 functions as the Proton acceptor in the catalytic mechanism. Phosphotyrosine; by autocatalysis is present on residues Tyr-434, Tyr-438, and Tyr-439. Glycyl lysine isopeptide (Lys-Gly) (interchain with G-Cter in ubiquitin) cross-links involve residues Lys-441 and Lys-444. Ser-551 is subject to Phosphoserine; by GSK3-beta. The residue at position 555 (Ser-555) is a Phosphoserine. The tract at residues Ser-555 to Cys-640 is disordered. Positions Pro-563–Asn-572 are enriched in acidic residues. Residues Met-573 to Leu-589 are compositionally biased toward low complexity. The segment covering Pro-590 to Glu-599 has biased composition (basic and acidic residues).

Belongs to the protein kinase superfamily. Tyr protein kinase family. Insulin receptor subfamily. As to quaternary structure, tetramer of 2 alpha and 2 beta chains linked by disulfide bonds. The alpha chains contribute to the formation of the ligand-binding domain, while the beta chain carries the kinase domain. Interacts with PIK3R1 and with the PTB/PID domains of IRS1 and SHC1 in vitro when autophosphorylated on tyrosine residues. Forms a hybrid receptor with INSR, the hybrid is a tetramer consisting of 1 alpha chain and 1 beta chain of INSR and 1 alpha chain and 1 beta chain of IGF1R. Interacts with ARRB1 and ARRB2. Interacts with GRB10. Interacts with RACK1. Interacts with SOCS1, SOCS2 and SOCS3. Interacts with 14-3-3 proteins. Interacts with NMD2. Interacts with MAP3K5. Interacts with STAT3. Interacts (nascent precursor form) with ZFAND2B. In terms of processing, autophosphorylated on tyrosine residues in response to ligand binding. Autophosphorylation occurs in trans, i.e. one subunit of the dimeric receptor phosphorylates tyrosine residues on the other subunit. Autophosphorylation occurs in a sequential manner; Tyr-438 is predominantly phosphorylated first, followed by phosphorylation of Tyr-434 and Tyr-439. While every single phosphorylation increases kinase activity, all three tyrosine residues in the kinase activation loop (Tyr-438, Tyr-434 and Tyr-439) have to be phosphorylated for optimal activity. Can be autophosphorylated at additional tyrosine residues (in vitro). Autophosphorylated is followed by phosphorylation of juxtamembrane tyrosines and C-terminal serines. May also be phosphorylated at Tyr-434 and Tyr-439 by mTORC2. Phosphorylation of Tyr-253 is required for IRS1- and SHC1-binding. Phosphorylation of Ser-551 by GSK-3beta restrains kinase activity and promotes cell surface expression, it requires a priming phosphorylation at Ser-555. Dephosphorylated by PTPN1. Polyubiquitinated at Lys-441 and Lys-444 through both 'Lys-48' and 'Lys-29' linkages, promoting receptor endocytosis and subsequent degradation by the proteasome. Ubiquitination is facilitated by pre-existing phosphorylation. Post-translationally, sumoylated with SUMO1. In terms of processing, controlled by regulated intramembrane proteolysis (RIP). Undergoes metalloprotease-dependent constitutive ectodomain shedding to produce a membrane-anchored 52 kDa C-Terminal fragment which is further processed by presenilin gamma-secretase to yield an intracellular 50 kDa fragment.

Its subcellular location is the cell membrane. The enzyme catalyses L-tyrosyl-[protein] + ATP = O-phospho-L-tyrosyl-[protein] + ADP + H(+). Its activity is regulated as follows. Activated by autophosphorylation at Tyr-434, Tyr-438 and Tyr-439 on the kinase activation loop; phosphorylation at all three tyrosine residues is required for optimal kinase activity. Inhibited by MSC1609119A-1, BMS-754807, PQIP, benzimidazole pyridinone, isoquinolinedione, bis-azaindole, 3-cyanoquinoline, 2,4-bis-arylamino-1,3-pyrimidine, pyrrolopyrimidine, pyrrole-5-carboxaldehyde, picropodophyllin (PPP), tyrphostin derivatives. While most inhibitors bind to the ATP binding pocket, MSC1609119A-1 functions as allosteric inhibitor and binds close to the DFG motif and the activation loop. Receptor tyrosine kinase which mediates actions of insulin-like growth factor 1 (IGF1). Binds IGF1 with high affinity and IGF2 and insulin (INS) with a lower affinity. The activated IGF1R is involved in cell growth and survival control. IGF1R is crucial for tumor transformation and survival of malignant cell. Ligand binding activates the receptor kinase, leading to receptor autophosphorylation, and tyrosines phosphorylation of multiple substrates, that function as signaling adapter proteins including, the insulin-receptor substrates (IRS1/2), Shc and 14-3-3 proteins. Phosphorylation of IRSs proteins lead to the activation of two main signaling pathways: the PI3K-AKT/PKB pathway and the Ras-MAPK pathway. The result of activating the MAPK pathway is increased cellular proliferation, whereas activating the PI3K pathway inhibits apoptosis and stimulates protein synthesis. Phosphorylated IRS1 can activate the 85 kDa regulatory subunit of PI3K (PIK3R1), leading to activation of several downstream substrates, including protein AKT/PKB. AKT phosphorylation, in turn, enhances protein synthesis through mTOR activation and triggers the antiapoptotic effects of IGFIR through phosphorylation and inactivation of BAD. In parallel to PI3K-driven signaling, recruitment of Grb2/SOS by phosphorylated IRS1 or Shc leads to recruitment of Ras and activation of the ras-MAPK pathway. In addition to these two main signaling pathways IGF1R signals also through the Janus kinase/signal transducer and activator of transcription pathway (JAK/STAT). Phosphorylation of JAK proteins can lead to phosphorylation/activation of signal transducers and activators of transcription (STAT) proteins. In particular activation of STAT3, may be essential for the transforming activity of IGF1R. The JAK/STAT pathway activates gene transcription and may be responsible for the transforming activity. JNK kinases can also be activated by the IGF1R. IGF1 exerts inhibiting activities on JNK activation via phosphorylation and inhibition of MAP3K5/ASK1, which is able to directly associate with the IGF1R. When present in a hybrid receptor with INSR, binds IGF1. This is Insulin-like growth factor 1 receptor (IGF1R) from Bos taurus (Bovine).